The chain runs to 266 residues: Putative expansin-A30 (266 aa).

The signal sequence occupies residues 1–24; the sequence is MAAASSTTATTAILAAVIISLAGA. In terms of domain architecture, Expansin-like EG45 spans 55-170; sequence GGACGYGNLY…RRVPCARAGG (116 aa). The Expansin-like CBD domain occupies 180-261; that stretch reads YWLLAYVMNV…SWCFGLTYQA (82 aa).

It belongs to the expansin family. Expansin A subfamily.

It is found in the secreted. It localises to the cell wall. The protein resides in the membrane. In terms of biological role, may cause loosening and extension of plant cell walls by disrupting non-covalent bonding between cellulose microfibrils and matrix glucans. No enzymatic activity has been found. May be required for rapid internodal elongation in deepwater rice during submergence. The polypeptide is Putative expansin-A30 (EXPA30) (Oryza sativa subsp. japonica (Rice)).